Here is a 164-residue protein sequence, read N- to C-terminus: MKVILREDFINLGKEGDIVDVKDGFARNYLLPKGFAVFSNKHNIDIFSQKKRAILKRQETRRKMAVELKEKLDKVNLEFIMQSNDSGKLFHSINSSNIADELLKLGFEIERRKIDMHHGALKAFGTYNVTIKLYEGISSVITVEIKREEKKNSLKKSKSVEKEV.

It belongs to the bacterial ribosomal protein bL9 family.

In terms of biological role, binds to the 23S rRNA. This Borrelia duttonii (strain Ly) protein is Large ribosomal subunit protein bL9.